A 295-amino-acid polypeptide reads, in one-letter code: GTPase Era (295 aa).

The region spanning 3–170 (KSGFVTIVGR…VDLMKTELPE (168 aa)) is the Era-type G domain. The interval 11 to 18 (GRPNVGKS) is G1. A GTP-binding site is contributed by 11–18 (GRPNVGKS). Positions 37–41 (QTTRN) are G2. The G3 stretch occupies residues 58–61 (DTPG). GTP contacts are provided by residues 58-62 (DTPGI) and 120-123 (NKID). The G4 stretch occupies residues 120–123 (NKID). Residues 149–151 (IAA) form a G5 region. The KH type-2 domain maps to 201 to 278 (LRDEVPHGIA…NVKIWVKVRK (78 aa)).

This sequence belongs to the TRAFAC class TrmE-Era-EngA-EngB-Septin-like GTPase superfamily. Era GTPase family. As to quaternary structure, monomer.

The protein resides in the cytoplasm. It is found in the cell membrane. In terms of biological role, an essential GTPase that binds both GDP and GTP, with rapid nucleotide exchange. Plays a role in 16S rRNA processing and 30S ribosomal subunit biogenesis and possibly also in cell cycle regulation and energy metabolism. This Clostridium botulinum (strain Eklund 17B / Type B) protein is GTPase Era.